Reading from the N-terminus, the 63-residue chain is 2-hydroxymuconate tautomerase (63 aa).

Catalysis depends on Pro-2, which acts as the Proton acceptor; via imino nitrogen.

This sequence belongs to the 4-oxalocrotonate tautomerase family. Homohexamer.

It carries out the reaction (2Z,4E)-2-hydroxyhexa-2,4-dienedioate = (3E)-2-oxohex-3-enedioate. It participates in aromatic compound metabolism; salicylate degradation. Functionally, catalyzes the ketonization of 2-hydroxymuconate stereoselectively to yield 2-oxo-3-hexenedioate. In Stutzerimonas stutzeri (Pseudomonas stutzeri), this protein is 2-hydroxymuconate tautomerase (nahJ).